Here is a 431-residue protein sequence, read N- to C-terminus: NADH-quinone oxidoreductase subunit D 2 (431 aa).

The interval 1–37 is disordered; the sequence is MSEAKGVGGIDPRATPGSAGAGERPPMGTLSPRAGEG.

This sequence belongs to the complex I 49 kDa subunit family. NDH-1 is composed of 14 different subunits. Subunits NuoB, C, D, E, F, and G constitute the peripheral sector of the complex.

Its subcellular location is the cell inner membrane. The enzyme catalyses a quinone + NADH + 5 H(+)(in) = a quinol + NAD(+) + 4 H(+)(out). Functionally, NDH-1 shuttles electrons from NADH, via FMN and iron-sulfur (Fe-S) centers, to quinones in the respiratory chain. The immediate electron acceptor for the enzyme in this species is believed to be ubiquinone. Couples the redox reaction to proton translocation (for every two electrons transferred, four hydrogen ions are translocated across the cytoplasmic membrane), and thus conserves the redox energy in a proton gradient. The protein is NADH-quinone oxidoreductase subunit D 2 of Anaeromyxobacter sp. (strain K).